The sequence spans 358 residues: Na(+)/H(+) exchange regulatory cofactor NHE-RF1 (358 aa).

S2 is subject to N-acetylserine. A phosphoserine mark is found at S2 and S46. One can recognise a PDZ 1 domain in the interval 14 to 94 (LCCLEKGPNG…AVRLLVVDPD (81 aa)). Low complexity predominate over residues 114–134 (QAGPEQAGPPAAPGEQGPAGE). Positions 114–151 (QAGPEQAGPPAAPGEQGPAGENEPREVEKSHPERRELR) are disordered. Positions 135–151 (NEPREVEKSHPERRELR) are enriched in basic and acidic residues. The region spanning 154–234 (LCAMKKGPNG…EAKLLVVDKE (81 aa)) is the PDZ 2 domain. Positions 247–358 (SSEHLNGPLP…SEKKELFSNL (112 aa)) are disordered. The span at 272 to 290 (LAPAASESPRPALARSASS) shows a compositional bias: low complexity. 3 positions are modified to phosphoserine: S279, S289, and S290. At T292 the chain carries Phosphothreonine. S293, S298, and S301 each carry phosphoserine. Low complexity predominate over residues 308–327 (TAPSSTSSSSDPILDFSISL). Residues 348 to 358 (WSEKKELFSNL) are compositionally biased toward basic and acidic residues.

As to quaternary structure, homodimer, and heterodimer with NHERF2. Binds the N-termini of EZR, RDX and MSN. Binds the C-termini of PDGFRA, PDGFRB, ADRB2, NOS2 and CFTR. Binds ARHGAP17, EPI64, RACK1, OPRK1, GNAQ, CTNNB1 and PLCB3. Binds PDZK1. Interacts with CLCN3. Binds the C-terminus of PAG1. In resting T-cells, part of a PAG1-NHERF1-MSN complex which is disrupted upon TCR activation. Forms a complex with CFTR and SLC4A7. Forms a complex with SLC4A7 and ATP6V1B1. Interacts with TRPC4 (via the PDZ-binding domain). Directly interacts with HTR4. Interacts (via the PDZ 1 domain) with PODXL (via the C-terminal PDZ-binding motif DTHL); interaction is not detected in glomerular epithelium cells. Interacts (via the PDZ 1 domain) with PODXL (via the C-terminal PDZ-binding motif DTHL); the interaction take place early in the secretory pathway and is necessary for its apical membrane sorting. Interacts with SLC26A3. Interacts with MCC. Interacts with SLC34A1. Interacts (via the PDZ domains) with SLC26A6 isoform 4 and isoform 5. Interacts (via PDZ domains) with ACE2 (via PDZ-binding motif); the interaction may enhance ACE2 membrane residence. Post-translationally, phosphorylated on serine residues. Detected in ileum, duodenum and in kidney, where it is found in the glomerulus, the proximal tubule, the thick ascending limb of Henle's loop and the cortical collecting duct.

It is found in the cytoplasm. The protein resides in the apical cell membrane. Its subcellular location is the cell projection. It localises to the filopodium. The protein localises to the ruffle. It is found in the microvillus. The protein resides in the endomembrane system. Its function is as follows. Scaffold protein that connects plasma membrane proteins with members of the ezrin/moesin/radixin family and thereby helps to link them to the actin cytoskeleton and to regulate their surface expression. Necessary for recycling of internalized ADRB2. Was first known to play a role in the regulation of the activity and subcellular location of SLC9A3. Necessary for cAMP-mediated phosphorylation and inhibition of SLC9A3. Involved in sperm capacitation. May participate in the regulation of the chloride and bicarbonate homeostasis in spermatozoa. May enhance Wnt signaling. May participate in HTR4 targeting to microvilli. Involved in the regulation of phosphate reabsorption in the renal proximal tubules. The chain is Na(+)/H(+) exchange regulatory cofactor NHE-RF1 (NHERF1) from Oryctolagus cuniculus (Rabbit).